The following is a 147-amino-acid chain: Hemoglobin subunit gamma (147 aa).

A Globin domain is found at 3-147; that stretch reads NFTAEDKAAI…VASALGSRYH (145 aa). Heme b is bound by residues histidine 64 and histidine 93.

Belongs to the globin family. As to quaternary structure, heterotetramer of two alpha chains and two gamma chains in fetal hemoglobin (Hb F). Red blood cells.

Functionally, gamma chains make up the fetal hemoglobin F, in combination with alpha chains. This Aotus azarae (Azara's night monkey) protein is Hemoglobin subunit gamma (HBG).